Here is a 111-residue protein sequence, read N- to C-terminus: ASFDEAPPGNSKSGEKIFKTKCAQCHTVDKGAGHKQGPNLNGLFGRQSGTTAGYSYSTANKNMAVIWEEKTLYDYLLNPKKYIPGTKMVFPGLKKPQDRADLIAYLKESTA.

Position 1 is an N-acetylalanine (A1). Heme c contacts are provided by C22, C25, and H26. Position 80 is an N6,N6,N6-trimethyllysine (K80). A heme c-binding site is contributed by M88. K94 bears the N6,N6,N6-trimethyllysine mark.

This sequence belongs to the cytochrome c family. In terms of processing, binds 1 heme c group covalently per subunit.

It localises to the mitochondrion intermembrane space. Functionally, electron carrier protein. The oxidized form of the cytochrome c heme group can accept an electron from the heme group of the cytochrome c1 subunit of cytochrome reductase. Cytochrome c then transfers this electron to the cytochrome oxidase complex, the final protein carrier in the mitochondrial electron-transport chain. This Vigna radiata var. radiata (Mung bean) protein is Cytochrome c.